The chain runs to 318 residues: Acetylglutamate kinase (318 aa).

Substrate is bound by residues 80–81 (GG), arginine 102, and asparagine 203.

The protein belongs to the acetylglutamate kinase family. ArgB subfamily.

The protein localises to the cytoplasm. It carries out the reaction N-acetyl-L-glutamate + ATP = N-acetyl-L-glutamyl 5-phosphate + ADP. The protein operates within amino-acid biosynthesis; L-arginine biosynthesis; N(2)-acetyl-L-ornithine from L-glutamate: step 2/4. Catalyzes the ATP-dependent phosphorylation of N-acetyl-L-glutamate. In Bifidobacterium adolescentis (strain ATCC 15703 / DSM 20083 / NCTC 11814 / E194a), this protein is Acetylglutamate kinase.